Consider the following 245-residue polypeptide: Transcriptional regulatory protein YpdB (245 aa).

The 115-residue stretch at 2 to 116 (KVIIVEDEFL…RITGMLQKLE (115 aa)) folds into the Response regulatory domain. Aspartate 53 is modified (4-aspartylphosphate). The 106-residue stretch at 140-245 (INLVKDERII…VKEFRQLMHL (106 aa)) folds into the HTH LytTR-type domain.

Phosphorylated by YpdA.

It is found in the cytoplasm. Its function is as follows. Member of the two-component regulatory system YpdA/YpdB. YpdB regulates expression of yhjX by binding to its promoter region. This is Transcriptional regulatory protein YpdB (ypdB) from Escherichia coli O6:H1 (strain CFT073 / ATCC 700928 / UPEC).